Reading from the N-terminus, the 245-residue chain is 4-hydroxy-tetrahydrodipicolinate reductase (245 aa).

NAD(+) is bound by residues 7-12 (GAKGKV), 75-77 (GTT), and 102-105 (APNF). The Proton donor/acceptor role is filled by H132. Residue H133 participates in (S)-2,3,4,5-tetrahydrodipicolinate binding. Residue K136 is the Proton donor of the active site. Residue 142-143 (GT) participates in (S)-2,3,4,5-tetrahydrodipicolinate binding.

The protein belongs to the DapB family.

Its subcellular location is the cytoplasm. It catalyses the reaction (S)-2,3,4,5-tetrahydrodipicolinate + NAD(+) + H2O = (2S,4S)-4-hydroxy-2,3,4,5-tetrahydrodipicolinate + NADH + H(+). It carries out the reaction (S)-2,3,4,5-tetrahydrodipicolinate + NADP(+) + H2O = (2S,4S)-4-hydroxy-2,3,4,5-tetrahydrodipicolinate + NADPH + H(+). The protein operates within amino-acid biosynthesis; L-lysine biosynthesis via DAP pathway; (S)-tetrahydrodipicolinate from L-aspartate: step 4/4. In terms of biological role, catalyzes the conversion of 4-hydroxy-tetrahydrodipicolinate (HTPA) to tetrahydrodipicolinate. The polypeptide is 4-hydroxy-tetrahydrodipicolinate reductase (Mycobacterium tuberculosis (strain ATCC 25177 / H37Ra)).